The primary structure comprises 331 residues: Adenosine deaminase (331 aa).

Residues His-12 and His-14 each contribute to the Zn(2+) site. His-14, Asp-16, and Gly-170 together coordinate substrate. His-197 is a Zn(2+) binding site. The active-site Proton donor is the Glu-200. Asp-278 contributes to the Zn(2+) binding site.

This sequence belongs to the metallo-dependent hydrolases superfamily. Adenosine and AMP deaminases family. Adenosine deaminase subfamily. Zn(2+) serves as cofactor.

It carries out the reaction adenosine + H2O + H(+) = inosine + NH4(+). It catalyses the reaction 2'-deoxyadenosine + H2O + H(+) = 2'-deoxyinosine + NH4(+). Functionally, catalyzes the hydrolytic deamination of adenosine and 2-deoxyadenosine. The sequence is that of Adenosine deaminase from Shewanella woodyi (strain ATCC 51908 / MS32).